The primary structure comprises 543 residues: CTP synthase (543 aa).

The segment at 1-267 (MKQTKYIFVT…LSPIAEILDL (267 aa)) is amidoligase domain. Serine 15 provides a ligand contact to CTP. Serine 15 is a binding site for UTP. ATP contacts are provided by residues 16-21 (SLGKGI) and aspartate 73. Mg(2+) contacts are provided by aspartate 73 and glutamate 141. Residues 148–150 (DIE), 188–193 (KTKPTQ), and lysine 224 each bind CTP. Residues 188–193 (KTKPTQ) and lysine 224 each bind UTP. One can recognise a Glutamine amidotransferase type-1 domain in the interval 292–543 (KIAFVGKYVD…IKAAINYEDN (252 aa)). Glycine 354 is a binding site for L-glutamine. The active-site Nucleophile; for glutamine hydrolysis is the cysteine 381. L-glutamine is bound by residues 382 to 385 (LGMQ), glutamate 405, and arginine 473. Active-site residues include histidine 516 and glutamate 518.

Belongs to the CTP synthase family. As to quaternary structure, homotetramer.

The enzyme catalyses UTP + L-glutamine + ATP + H2O = CTP + L-glutamate + ADP + phosphate + 2 H(+). It catalyses the reaction L-glutamine + H2O = L-glutamate + NH4(+). It carries out the reaction UTP + NH4(+) + ATP = CTP + ADP + phosphate + 2 H(+). It functions in the pathway pyrimidine metabolism; CTP biosynthesis via de novo pathway; CTP from UDP: step 2/2. Allosterically activated by GTP, when glutamine is the substrate; GTP has no effect on the reaction when ammonia is the substrate. The allosteric effector GTP functions by stabilizing the protein conformation that binds the tetrahedral intermediate(s) formed during glutamine hydrolysis. Inhibited by the product CTP, via allosteric rather than competitive inhibition. In terms of biological role, catalyzes the ATP-dependent amination of UTP to CTP with either L-glutamine or ammonia as the source of nitrogen. Regulates intracellular CTP levels through interactions with the four ribonucleotide triphosphates. This chain is CTP synthase, found in Campylobacter jejuni subsp. jejuni serotype O:6 (strain 81116 / NCTC 11828).